The sequence spans 189 residues: UPF0251 protein MTH_1178 (189 aa).

This sequence belongs to the UPF0251 family.

This Methanothermobacter thermautotrophicus (strain ATCC 29096 / DSM 1053 / JCM 10044 / NBRC 100330 / Delta H) (Methanobacterium thermoautotrophicum) protein is UPF0251 protein MTH_1178.